A 380-amino-acid chain; its full sequence is Glycine betaine/carnitine/choline transport ATP-binding protein OpuCA (380 aa).

The region spanning 2–236 (LKLEQVSKVY…PANEFVEEFI (235 aa)) is the ABC transporter domain. Position 35-42 (35-42 (GPSGCGKT)) interacts with ATP. CBS domains lie at 255–314 (MNRT…VGDV) and 315–373 (YRSD…WGDE).

This sequence belongs to the ABC transporter superfamily. As to quaternary structure, the complex is composed of two ATP-binding proteins (OpuCA), two transmembrane proteins (OpuCB and OpuCD) and a solute-binding protein (OpuCC).

Binds cyclic di-AMP (c-di-AMP), which may regulate the transporter activity. Its function is as follows. Involved in a high affinity multicomponent binding-protein-dependent transport system for glycine betaine, carnitine and choline; probably responsible for energy coupling to the transport system. The sequence is that of Glycine betaine/carnitine/choline transport ATP-binding protein OpuCA (opuCA) from Bacillus subtilis (strain 168).